The chain runs to 163 residues: Photosystem II extrinsic protein V (163 aa).

Residues 1-26 (MFRRLIGVVVATVLLTFQLIVGSATA) form the signal peptide. Residues cysteine 63, cysteine 66, histidine 67, and histidine 118 each coordinate heme c.

The protein belongs to the cytochrome c family. PsbV subfamily. As to quaternary structure, PSII is composed of 1 copy each of membrane proteins PsbA, PsbB, PsbC, PsbD, PsbE, PsbF, PsbH, PsbI, PsbJ, PsbK, PsbL, PsbM, PsbT, PsbX, PsbY, PsbZ, Psb30/Ycf12, peripheral proteins PsbO, CyanoQ (PsbQ), PsbU, PsbV and a large number of cofactors. It forms dimeric complexes. The cofactor is heme c.

The protein localises to the cellular thylakoid membrane. Functionally, one of the extrinsic, lumenal subunits of photosystem II (PSII). PSII is a light-driven water plastoquinone oxidoreductase, using light energy to abstract electrons from H(2)O, generating a proton gradient subsequently used for ATP formation. The extrinsic proteins stabilize the structure of photosystem II oxygen-evolving complex (OEC), the ion environment of oxygen evolution and protect the OEC against heat-induced inactivation. Low-potential cytochrome c that plays a role in the OEC of PSII. The chain is Photosystem II extrinsic protein V from Trichormus variabilis (strain ATCC 29413 / PCC 7937) (Anabaena variabilis).